A 157-amino-acid polypeptide reads, in one-letter code: uncharacterized protein (157 aa).

The chain crosses the membrane as a helical span at residues 42-64 (SCIRLIVMFICVAMITCPNSLRF).

The protein localises to the membrane. This is an uncharacterized protein from Saccharomyces cerevisiae (strain ATCC 204508 / S288c) (Baker's yeast).